Consider the following 269-residue polypeptide: Integral membrane protein 2C (269 aa).

T39 is modified (phosphothreonine). Residues 57–77 traverse the membrane as a helical; Signal-anchor for type II membrane protein segment; it reads VGGVCYLSMGMVVLLMGLVFA. One can recognise a BRICHOS domain in the interval 138–232; sequence FGGGDPADII…LCNGKDTYRL (95 aa). C165 and C224 are joined by a disulfide. N-linked (GlcNAc...) asparagine glycosylation occurs at N171.

The protein belongs to the ITM2 family. As to quaternary structure, interacts with BACE1. Interacts with APP. Interacts with STMN2. In terms of processing, type I membrane-bound, as well as soluble, furin has a pre-eminent role in ITM2C proteolytic processing. PCSK7 and PCSK5 may also be involved although to a lesser extent. The soluble form of PCSK7 is incapable of processing ITM2C. Fails to undergo shedding by ADAM10 and intramembrane cleavage by SPPL2B.

It localises to the lysosome membrane. The protein localises to the cell membrane. Functionally, negative regulator of amyloid-beta peptide production. May inhibit the processing of APP by blocking its access to alpha- and beta-secretase. Binding to the beta-secretase-cleaved APP C-terminal fragment is negligible, suggesting that ITM2C is a poor gamma-secretase cleavage inhibitor. May play a role in TNF-induced cell death and neuronal differentiation. This is Integral membrane protein 2C (Itm2c) from Mus musculus (Mouse).